A 251-amino-acid polypeptide reads, in one-letter code: Flap endonuclease Xni (251 aa).

Position 104 (Asp104) interacts with Mg(2+). Residues 160–249 enclose the 5'-3' exonuclease domain; the sequence is VQPQQLPDYW…IDGNLQQLRL (90 aa). Positions 171, 172, 180, 182, and 185 each coordinate K(+). Residues 184–189 form an interaction with DNA region; the sequence is GIGPKS.

This sequence belongs to the Xni family. Mg(2+) serves as cofactor. Requires K(+) as cofactor.

Its function is as follows. Has flap endonuclease activity. During DNA replication, flap endonucleases cleave the 5'-overhanging flap structure that is generated by displacement synthesis when DNA polymerase encounters the 5'-end of a downstream Okazaki fragment. The protein is Flap endonuclease Xni of Escherichia coli O139:H28 (strain E24377A / ETEC).